A 354-amino-acid polypeptide reads, in one-letter code: Deoxyribonuclease-2-beta (354 aa).

An N-terminal signal peptide occupies residues 1–22 (MTAKPLRTVLSLLFFALSGVLG). 9 N-linked (GlcNAc...) asparagine glycosylation sites follow: asparagine 70, asparagine 77, asparagine 95, asparagine 98, asparagine 114, asparagine 129, asparagine 208, asparagine 271, and asparagine 319.

This sequence belongs to the DNase II family. As to expression, highly expressed in the eye lens. Detected in liver, but not in the other tissues tested.

It localises to the lysosome. It catalyses the reaction Endonucleolytic cleavage to nucleoside 3'-phosphates and 3'-phosphooligonucleotide end-products.. Hydrolyzes DNA under acidic conditions. Does not require divalent cations for activity. Participates in the degradation of nuclear DNA during lens cell differentiation. The polypeptide is Deoxyribonuclease-2-beta (Dnase2b) (Mus musculus (Mouse)).